A 265-amino-acid chain; its full sequence is MREITIGQYIPGNSVIHRLDPRTKILITTAFMVLLFVIDDFTGYAFPAVFIIAVSILSGISLKYMMRGLRPLVIIIVLTFVLNLFMIKGRVIYEIGPLDITYEGLYQGTFMVLRLIMLIVGTSLLTLTTSPIALTDGIESLLKPFRRVGVPAHELAMMMTIALRFIPTLMEETDKIMKAQMARGADFASGNVVQRARSLVPLLVPLFINAFRRADDLAMAMESRCYRGGENRTRMKQLRMTSADLAAFIATGLLAVGSIMSRFIW.

5 helical membrane-spanning segments follow: residues 32–52 (MVLLFVIDDFTGYAFPAVFII), 72–92 (LVIIIVLTFVLNLFMIKGRVI), 115–135 (LIMLIVGTSLLTLTTSPIALT), 150–170 (VPAHELAMMMTIALRFIPTLM), and 245–265 (LAAFIATGLLAVGSIMSRFIW).

This sequence belongs to the energy-coupling factor EcfT family. In terms of assembly, forms a stable energy-coupling factor (ECF) transporter complex composed of 2 membrane-embedded substrate-binding proteins (S component), 2 ATP-binding proteins (A component) and 2 transmembrane proteins (T component). May be able to interact with more than 1 S component at a time.

It is found in the cell membrane. In terms of biological role, transmembrane (T) component of an energy-coupling factor (ECF) ABC-transporter complex. Unlike classic ABC transporters this ECF transporter provides the energy necessary to transport a number of different substrates. This is Energy-coupling factor transporter transmembrane protein EcfT from Thermosediminibacter oceani (strain ATCC BAA-1034 / DSM 16646 / JW/IW-1228P).